Here is a 584-residue protein sequence, read N- to C-terminus: UvrABC system protein C (584 aa).

A GIY-YIG domain is found at 14–91 (HKPGCYLWKD…IKTHLPKYNI (78 aa)). The 36-residue stretch at 192 to 227 (DHILMILQTKEQHAVTKLDFENAQKYAEQQKALTSI) folds into the UVR domain.

It belongs to the UvrC family. In terms of assembly, interacts with UvrB in an incision complex.

The protein localises to the cytoplasm. Its function is as follows. The UvrABC repair system catalyzes the recognition and processing of DNA lesions. UvrC both incises the 5' and 3' sides of the lesion. The N-terminal half is responsible for the 3' incision and the C-terminal half is responsible for the 5' incision. In Ureaplasma parvum serovar 3 (strain ATCC 27815 / 27 / NCTC 11736), this protein is UvrABC system protein C.